The sequence spans 130 residues: Small ribosomal subunit protein uS8 (130 aa).

It belongs to the universal ribosomal protein uS8 family. As to quaternary structure, part of the 30S ribosomal subunit. Contacts proteins S5 and S12.

One of the primary rRNA binding proteins, it binds directly to 16S rRNA central domain where it helps coordinate assembly of the platform of the 30S subunit. This chain is Small ribosomal subunit protein uS8, found in Saccharophagus degradans (strain 2-40 / ATCC 43961 / DSM 17024).